We begin with the raw amino-acid sequence, 886 residues long: Translation initiation factor IF-2 (886 aa).

Disordered stretches follow at residues 46–91 (LDHL…VEVR) and 121–297 (EQQK…HGFT). Residues 72 to 82 (STLSVTGSTGK) show a composition bias toward polar residues. Composition is skewed to basic and acidic residues over residues 130-163 (AELK…AERK), 175-239 (AKSE…DHHL), and 246-260 (REAE…EQGT). Residues 386-555 (PRAPVVTVMG…LNQSELLELT (170 aa)) enclose the tr-type G domain. A G1 region spans residues 395–402 (GHVDHGKT). 395–402 (GHVDHGKT) provides a ligand contact to GTP. The G2 stretch occupies residues 420 to 424 (GITQH). Residues 441–444 (DTPG) are G3. GTP-binding positions include 441–445 (DTPGH) and 495–498 (NKMD). Positions 495–498 (NKMD) are G4. The tract at residues 531–533 (SAK) is G5.

The protein belongs to the TRAFAC class translation factor GTPase superfamily. Classic translation factor GTPase family. IF-2 subfamily.

Its subcellular location is the cytoplasm. Functionally, one of the essential components for the initiation of protein synthesis. Protects formylmethionyl-tRNA from spontaneous hydrolysis and promotes its binding to the 30S ribosomal subunits. Also involved in the hydrolysis of GTP during the formation of the 70S ribosomal complex. The protein is Translation initiation factor IF-2 of Pseudoalteromonas translucida (strain TAC 125).